The chain runs to 191 residues: UPF0149 protein VC_2476 (191 aa).

It belongs to the UPF0149 family.

This is UPF0149 protein VC_2476 from Vibrio cholerae serotype O1 (strain ATCC 39315 / El Tor Inaba N16961).